The chain runs to 97 residues: Large ribosomal subunit protein eL37 (97 aa).

K10 is subject to N6-acetyllysine. The Zn(2+) site is built by C19, C22, C34, and C37. The C4-type zinc finger occupies 19 to 37 (CRRCGSKAYHLQKSTCGKC). Phosphoserine occurs at positions 96 and 97.

It belongs to the eukaryotic ribosomal protein eL37 family. Component of the large ribosomal subunit.

The protein localises to the cytoplasm. Its function is as follows. Component of the large ribosomal subunit. The ribosome is a large ribonucleoprotein complex responsible for the synthesis of proteins in the cell. In Bos taurus (Bovine), this protein is Large ribosomal subunit protein eL37 (RPL37).